Reading from the N-terminus, the 204-residue chain is Rho GDP-dissociation inhibitor 1 (204 aa).

Residues Met1–Gln36 are disordered. Residue Ala2 is modified to N-acetylalanine. Ser34 carries the phosphoserine modification. Lys43 bears the N6-acetyllysine mark. A Phosphoserine modification is found at Ser47. Residues Asn66 to Pro83 form a hydrophobic region. Position 101 is a phosphoserine; by PKA (Ser101). At Lys105 the chain carries N6-acetyllysine. Residue Ser115 is modified to Phosphoserine; by PKC. Lys127 bears the N6-acetyllysine mark. Residues Lys138 and Lys141 each participate in a glycyl lysine isopeptide (Lys-Gly) (interchain with G-Cter in SUMO1); alternate cross-link. Residues Lys138 and Lys141 each participate in a glycyl lysine isopeptide (Lys-Gly) (interchain with G-Cter in SUMO2); alternate cross-link. Lys141 carries the post-translational modification N6-acetyllysine; alternate. Lys141 is subject to N6-succinyllysine; alternate. Lys178 is modified (N6-acetyllysine).

This sequence belongs to the Rho GDI family. As to quaternary structure, monomer. Interacts with FER. Interacts with PLXNB3. Forms a heterodimer with RAC1. Interacts with RHOA, the affinity is increased by three orders of magnitude when RHOA is prenylated. Interacts with PSMD10; the interaction increases ARHGDIA association with RHOA, leading to ARHGDIA-mediated inactivation of RHOA and ROCK and prolonged AKT activation. Interacts with KANK2; the interaction is direct and may regulate the interaction of ARHGDIA with RHOA, RAC1 and CDC42. Interacts with RHOC. Interacts with CDC42. Interacts with NGFR (via death domain); NGFR binding decreases the affinity for RHOA. In terms of tissue distribution, brain, lung, thymus, spleen, small intestine, and kidney, and weakly in heart and liver.

The protein resides in the cytoplasm. In terms of biological role, controls Rho proteins homeostasis. Regulates the GDP/GTP exchange reaction of the Rho proteins by inhibiting the dissociation of GDP from them, and the subsequent binding of GTP to them. Retains Rho proteins such as CDC42, RAC1 and RHOA in an inactive cytosolic pool, regulating their stability and protecting them from degradation. Actively involved in the recycling and distribution of activated Rho GTPases in the cell, mediates extraction from membranes of both inactive and activated molecules due its exceptionally high affinity for prenylated forms. Through the modulation of Rho proteins, may play a role in cell motility regulation. In glioma cells, inhibits cell migration and invasion by mediating the signals of SEMA5A and PLXNB3 that lead to inactivation of RAC1. The chain is Rho GDP-dissociation inhibitor 1 (ARHGDIA) from Bos taurus (Bovine).